The sequence spans 224 residues: ATP synthase subunit a (224 aa).

Helical transmembrane passes span 17-37, 72-92, 99-119, 125-145, 170-190, and 195-215; these read LSLN…IYWL, IFIS…FPYI, LTLT…YGWI, MFAH…MVCI, LLLT…VTFL, and IALL…FAVL.

This sequence belongs to the ATPase A chain family. In terms of assembly, F-type ATPases have 2 components, CF(1) - the catalytic core - and CF(0) - the membrane proton channel. CF(1) has five subunits: alpha(3), beta(3), gamma(1), delta(1), epsilon(1). CF(0) has three main subunits: a, b and c.

The protein resides in the mitochondrion inner membrane. In terms of biological role, mitochondrial membrane ATP synthase (F(1)F(0) ATP synthase or Complex V) produces ATP from ADP in the presence of a proton gradient across the membrane which is generated by electron transport complexes of the respiratory chain. F-type ATPases consist of two structural domains, F(1) - containing the extramembraneous catalytic core and F(0) - containing the membrane proton channel, linked together by a central stalk and a peripheral stalk. During catalysis, ATP synthesis in the catalytic domain of F(1) is coupled via a rotary mechanism of the central stalk subunits to proton translocation. Key component of the proton channel; it may play a direct role in the translocation of protons across the membrane. This chain is ATP synthase subunit a (mt:ATPase6), found in Drosophila mauritiana (Fruit fly).